Here is a 353-residue protein sequence, read N- to C-terminus: UDP-N-acetylglucosamine--N-acetylmuramyl-(pentapeptide) pyrophosphoryl-undecaprenol N-acetylglucosamine transferase (353 aa).

UDP-N-acetyl-alpha-D-glucosamine-binding positions include S11 to G13, R164, S194, and Q289.

Belongs to the glycosyltransferase 28 family. MurG subfamily.

Its subcellular location is the cell membrane. The catalysed reaction is di-trans,octa-cis-undecaprenyl diphospho-N-acetyl-alpha-D-muramoyl-L-alanyl-D-glutamyl-meso-2,6-diaminopimeloyl-D-alanyl-D-alanine + UDP-N-acetyl-alpha-D-glucosamine = di-trans,octa-cis-undecaprenyl diphospho-[N-acetyl-alpha-D-glucosaminyl-(1-&gt;4)]-N-acetyl-alpha-D-muramoyl-L-alanyl-D-glutamyl-meso-2,6-diaminopimeloyl-D-alanyl-D-alanine + UDP + H(+). The protein operates within cell wall biogenesis; peptidoglycan biosynthesis. In terms of biological role, cell wall formation. Catalyzes the transfer of a GlcNAc subunit on undecaprenyl-pyrophosphoryl-MurNAc-pentapeptide (lipid intermediate I) to form undecaprenyl-pyrophosphoryl-MurNAc-(pentapeptide)GlcNAc (lipid intermediate II). The chain is UDP-N-acetylglucosamine--N-acetylmuramyl-(pentapeptide) pyrophosphoryl-undecaprenol N-acetylglucosamine transferase from Clostridium kluyveri (strain ATCC 8527 / DSM 555 / NBRC 12016 / NCIMB 10680 / K1).